Here is a 176-residue protein sequence, read N- to C-terminus: RNA pyrophosphohydrolase (176 aa).

The region spanning 6–149 (GYRPNVGIVI…KRDVYRRVMK (144 aa)) is the Nudix hydrolase domain. The Nudix box motif lies at 38–59 (GGINPGESAEQAMYRELFEEVG).

It belongs to the Nudix hydrolase family. RppH subfamily. A divalent metal cation is required as a cofactor.

Functionally, accelerates the degradation of transcripts by removing pyrophosphate from the 5'-end of triphosphorylated RNA, leading to a more labile monophosphorylated state that can stimulate subsequent ribonuclease cleavage. This Klebsiella pneumoniae (strain 342) protein is RNA pyrophosphohydrolase.